The chain runs to 131 residues: 1,4-dihydroxy-2-naphthoyl-CoA hydrolase (131 aa).

Asp7 is a catalytic residue.

This sequence belongs to the 4-hydroxybenzoyl-CoA thioesterase family. DHNA-CoA hydrolase subfamily.

The enzyme catalyses 1,4-dihydroxy-2-naphthoyl-CoA + H2O = 1,4-dihydroxy-2-naphthoate + CoA + H(+). The protein operates within cofactor biosynthesis; phylloquinone biosynthesis. It participates in quinol/quinone metabolism; 1,4-dihydroxy-2-naphthoate biosynthesis; 1,4-dihydroxy-2-naphthoate from chorismate: step 7/7. In terms of biological role, catalyzes the hydrolysis of 1,4-dihydroxy-2-naphthoyl-CoA (DHNA-CoA) to 1,4-dihydroxy-2-naphthoate (DHNA), a reaction involved in phylloquinone (vitamin K1) biosynthesis. This is 1,4-dihydroxy-2-naphthoyl-CoA hydrolase from Synechococcus sp. (strain RCC307).